Here is a 62-residue protein sequence, read N- to C-terminus: Large ribosomal subunit protein bL28 (62 aa).

Belongs to the bacterial ribosomal protein bL28 family.

The protein is Large ribosomal subunit protein bL28 of Helicobacter pylori (strain HPAG1).